We begin with the raw amino-acid sequence, 721 residues long: Angiomotin-like 2a (721 aa).

The disordered stretch occupies residues 35–84; it reads QQALRGGSSGGGAGSPRSSLESLTQEESLSPQLSARQEPQGQEHQGDFQH. A compositionally biased stretch (low complexity) spans 49–68; that stretch reads SPRSSLESLTQEESLSPQLS. Position 103 is a phosphotyrosine; by FGFR1 (Tyr103). Positions 169-214 are disordered; it reads DNIPMSSSHSYPQLSNNHSDTVVNEQSVHQPDQRGPPPEYPFMVRS. Residues 172 to 198 are compositionally biased toward polar residues; the sequence is PMSSSHSYPQLSNNHSDTVVNEQSVHQ. Residues 275-531 adopt a coiled-coil conformation; it reads ANNFQMEQLI…TRWEQKYLEE (257 aa). Positions 554–567 are enriched in polar residues; that stretch reads INHSPRNSPNSSFN. Disordered stretches follow at residues 554–575 and 666–709; these read INHSPRNSPNSSFNEDLPSPNH and DSST…TQIS. The span at 688-702 shows a compositional bias: low complexity; that stretch reads SAPEPSTASSSESTS. The PDZ-binding signature appears at 718–721; that stretch reads EILI.

Belongs to the angiomotin family. In terms of assembly, interacts with SRC. In terms of processing, phosphorylation at Tyr-103 is necessary for efficient binding to SRC and synergistically functioning with SRC to activate the downstream MAPK pathway. As to expression, expressed in endothelial cells.

Its subcellular location is the recycling endosome. It localises to the cytoplasm. The protein resides in the cell projection. The protein localises to the podosome. It is found in the cell junction. Required for proper architecture of actin filaments and for cell movements during embryogenesis. Plays a role in the radial actin fiber architecture in skin epithelial cells, thereby maintains cell geometry, size and cell interconnectivity within the skin. Plays an important role in coupling actin fibers to cell junctions in endothelial cells and is therefore required for correct endothelial cell morphology and maintenance of dorsal aorta lumen expansion during embryogenesis. May further play a role in the polarity, proliferation and migration of endothelial cells, and therefore participates in angiogenesis. Inhibits the Wnt/beta-catenin signaling pathway, probably by recruiting CTNNB1 to recycling endosomes and hence preventing its translocation to the nucleus. Regulates the translocation of phosphorylated SRC to peripheral cell-matrix adhesion sites. Selectively promotes FGF-induced MAPK activation through SRC. The protein is Angiomotin-like 2a (amotl2a) of Danio rerio (Zebrafish).